Consider the following 310-residue polypeptide: Phosphoribosylaminoimidazole-succinocarboxamide synthase (310 aa).

The protein belongs to the SAICAR synthetase family.

It catalyses the reaction 5-amino-1-(5-phospho-D-ribosyl)imidazole-4-carboxylate + L-aspartate + ATP = (2S)-2-[5-amino-1-(5-phospho-beta-D-ribosyl)imidazole-4-carboxamido]succinate + ADP + phosphate + 2 H(+). It participates in purine metabolism; IMP biosynthesis via de novo pathway; 5-amino-1-(5-phospho-D-ribosyl)imidazole-4-carboxamide from 5-amino-1-(5-phospho-D-ribosyl)imidazole-4-carboxylate: step 1/2. The protein is Phosphoribosylaminoimidazole-succinocarboxamide synthase of Xanthomonas axonopodis pv. citri (strain 306).